The primary structure comprises 66 residues: Large ribosomal subunit protein eL24 (66 aa).

Residues Cys6, Cys9, Cys32, and Cys36 each contribute to the Zn(2+) site. The segment at 6–36 (CSFCGKTIEPGTGIMYVRKDGAILYFCSNKC) adopts a C4-type zinc-finger fold.

This sequence belongs to the eukaryotic ribosomal protein eL24 family. In terms of assembly, part of the 50S ribosomal subunit. Forms a cluster with proteins L3 and L14. It depends on Zn(2+) as a cofactor.

Binds to the 23S rRNA. The chain is Large ribosomal subunit protein eL24 from Thermoplasma volcanium (strain ATCC 51530 / DSM 4299 / JCM 9571 / NBRC 15438 / GSS1).